The following is a 607-amino-acid chain: Glutamine--fructose-6-phosphate aminotransferase [isomerizing] (607 aa).

The active-site Nucleophile; for GATase activity is C2. Positions C2–E217 constitute a Glutamine amidotransferase type-2 domain. SIS domains are found at residues T277–S422 and I455–P597. K602 acts as the For Fru-6P isomerization activity in catalysis.

In terms of assembly, homodimer.

The protein resides in the cytoplasm. It carries out the reaction D-fructose 6-phosphate + L-glutamine = D-glucosamine 6-phosphate + L-glutamate. Catalyzes the first step in hexosamine metabolism, converting fructose-6P into glucosamine-6P using glutamine as a nitrogen source. This chain is Glutamine--fructose-6-phosphate aminotransferase [isomerizing], found in Bartonella quintana (strain Toulouse) (Rochalimaea quintana).